The chain runs to 139 residues: Non-structural protein 1 (139 aa).

The DLNP; interaction with MAP1B signature appears at 136 to 139; it reads DLNP.

Belongs to the pneumovirus non-structural protein 1 family. As to quaternary structure, monomer. Homomultimer. Heteromultimer with NS2. Interacts with the matrix protein M. Interacts with host ELOC and CUL2; this interaction allows NS1 to form an active E3 ligase with ELOC and CUL2. Interacts with host IRF3; this interaction leads to the disrupted association of IRF3 with CREBBP and thus reduced binding of IRF3 to the IFN-beta promoter. Interacts with host MAVS; this interaction prevents MAVS binding to RIGI and inhibits signaling pathway leading to interferon production. Interacts with host MAP1B/microtubule-associated protein 1B. Interacts with host TRIM25 (via SPRY domain); this interaction suppresses RIGI ubiquitination and results in decreased interaction between RIGI and MAVS.

The protein resides in the host cytoplasm. It localises to the host mitochondrion. Its subcellular location is the host nucleus. Its function is as follows. Plays a major role in antagonizing the type I IFN-mediated antiviral response by degrading or inhibiting multiple cellular factors required for either IFN induction or response pathways. Acts cooperatively with NS2 to repress activation and nuclear translocation of host IFN-regulatory factor IRF3. Also disrupts the association of IRF3 with CREBBP. Interacts with host mitochondrial-associated membrane (MAM) MAVS and prevents the interaction with RIGI. Interacts with TRIM25 to suppress TRIM25-mediated RIGI ubiquitination and thereby RIGI-MAVS interaction. Together with NS2, participates in the proteasomal degradation of host STAT2, IRF3, IRF7, TBK1 and RIGI through a NS-degradasome involving CUL2 and Elongin-C. The degradasome requires an intact mitochondrial MAVS. Decreases the levels of host TRAF3 and IKBKE/IKK-epsilon. As functions other than disruptions of the type I IFN-mediated antiviral signaling pathways, induces host SOCS1 and SOCS3 expression. Suppresses premature apoptosis by an NF-kappa-B-dependent, interferon-independent mechanism and thus facilitates virus growth. Additionally, NS1 may serve some inhibitory role in viral transcription and RNA replication. Suppresses proliferation and activation of host CD103+ CD8+ cytotoxic T-lymphocytes and Th17 helper T-lymphocytes. The protein is Non-structural protein 1 (1C) of Homo sapiens (Human).